Consider the following 417-residue polypeptide: L-rhamnose isomerase (417 aa).

Residues H260, D292, and D294 each contribute to the Mn(2+) site.

Belongs to the rhamnose isomerase family. The cofactor is Mn(2+).

It localises to the cytoplasm. The catalysed reaction is L-rhamnopyranose = L-rhamnulose. Its pathway is carbohydrate degradation; L-rhamnose degradation; glycerone phosphate from L-rhamnose: step 1/3. Functionally, catalyzes the interconversion of L-rhamnose and L-rhamnulose. The protein is L-rhamnose isomerase of Mannheimia succiniciproducens (strain KCTC 0769BP / MBEL55E).